The primary structure comprises 444 residues: N-succinylarginine dihydrolase (444 aa).

Substrate contacts are provided by residues 19 to 28, Asn-110, and 137 to 138; these read AGLSFGNVAS and HR. Glu-174 is an active-site residue. Residue Arg-214 coordinates substrate. His-250 is an active-site residue. Residues Asp-252 and Asn-362 each contribute to the substrate site. The active-site Nucleophile is the Cys-368.

Belongs to the succinylarginine dihydrolase family. As to quaternary structure, homodimer.

It carries out the reaction N(2)-succinyl-L-arginine + 2 H2O + 2 H(+) = N(2)-succinyl-L-ornithine + 2 NH4(+) + CO2. It functions in the pathway amino-acid degradation; L-arginine degradation via AST pathway; L-glutamate and succinate from L-arginine: step 2/5. Catalyzes the hydrolysis of N(2)-succinylarginine into N(2)-succinylornithine, ammonia and CO(2). The chain is N-succinylarginine dihydrolase from Shewanella frigidimarina (strain NCIMB 400).